Here is a 1072-residue protein sequence, read N- to C-terminus: MLGDGKEGTSTIPGFNQIQFEGFYRFIDQGLIEELSKFPKIEDIDHEIEFQLFMETYQLVEPLIKERDAVYESLTYSSELYVSAGLIWKTSRNMQEQRIFIGNIPLMNSLGTSIVNGIYRIVINQILQSPGIYYQSELDHNGISVYTGTIISDWGGRLELEIDKKARIWARVSRKQKISILVLSSAMGSNLREILENVCYPEIFLSFLTDKEKKKIGSKENAILEFYQQFSCVGGDPIFSESLCKELQKKFFHQRCELGRIGRRNINWRLNLNIPQNNIFLLPRDILAAADHLIGMKFGMGTLDDMNHLKNKRIRSVADLLQDQLGLALARLENVVKGTISGAIRHKLIPTPQNLVTSTPLTTTYESFFGLHPLSQVLDRTNPLTQIVHGRKLSYLGPGGLTGRTANFRIRDIHPSHYGRICPIDTSEGINVGLIGSLSIHARIGDWGSLESPFYELFEKSKKARIRMLFLSPSQDEYYMIAAGNSLALNRGIQEEQAVPARYRQEFLTIAWEEVHLRSIFPFQYFSIGASLIPFIEHNDANRALMSSNMQRQAVPLSRSEKCIVGTGLERQVALDSGVPAIAEHEGKILYTDTEKIVFSGNGDTLSIPLIMYERSNKNTCMHQKPQVRRGKCIKKGQILADGAATVGGELALGKNILVAYMPWEGYNFEDAVLISECLVYGDIYTSFHIRKYEIQTHVTTQGPERITKEIPHLEGRLLRNLDKNGIVMLGSWVETGDILVGKLTPQVAKESSYAPEDRLLRAILGIQVSTSKETCLKLPIGGRGRVIDVRWVQKKGGSSYNPEIIRVYISQKREIKVGDKVAGRHGNKGIISKILPRQDMPYLQDGRPVDMVFNPLGVPSRMNVGQIFECSLGLAGSLLDRHYRIAPFDERYEQEASRKLVFSELYEASKQTANPWVFEPEYPGKSRIFDGRTGDPFEQPVIIGKPYILKLIHQVDDKIHGRSSGHYALVTQQPLRGRSKQGGQRVGEMEVWALEGFGVAHILQEMLTYKSDHIRARQEVLGTTIIGGTIPKPEDAPESFRLLVRELRSLALELNHFLVSEKNFQINRKEV.

Belongs to the RNA polymerase beta chain family. In plastids the minimal PEP RNA polymerase catalytic core is composed of four subunits: alpha, beta, beta', and beta''. When a (nuclear-encoded) sigma factor is associated with the core the holoenzyme is formed, which can initiate transcription.

It localises to the plastid. Its subcellular location is the chloroplast. The enzyme catalyses RNA(n) + a ribonucleoside 5'-triphosphate = RNA(n+1) + diphosphate. DNA-dependent RNA polymerase catalyzes the transcription of DNA into RNA using the four ribonucleoside triphosphates as substrates. The chain is DNA-directed RNA polymerase subunit beta from Barbarea verna (Land cress).